The chain runs to 389 residues: tRNA-specific 2-thiouridylase MnmA (389 aa).

ATP-binding positions include 33-40 and Leu-59; that span reads GLSGGVDS. Residue Cys-120 is the Nucleophile of the active site. Cys-120 and Cys-219 are oxidised to a cystine. An ATP-binding site is contributed by Gly-145. The segment at 169–171 is interaction with tRNA; that stretch reads KDQ. Cys-219 functions as the Cysteine persulfide intermediate in the catalytic mechanism. Residues 326–327 form an interaction with tRNA region; sequence RY.

This sequence belongs to the MnmA/TRMU family.

Its subcellular location is the cytoplasm. It catalyses the reaction S-sulfanyl-L-cysteinyl-[protein] + uridine(34) in tRNA + AH2 + ATP = 2-thiouridine(34) in tRNA + L-cysteinyl-[protein] + A + AMP + diphosphate + H(+). Its function is as follows. Catalyzes the 2-thiolation of uridine at the wobble position (U34) of tRNA, leading to the formation of s(2)U34. In Synechococcus sp. (strain WH7803), this protein is tRNA-specific 2-thiouridylase MnmA.